The primary structure comprises 503 residues: Probable cytosol aminopeptidase (503 aa).

The Mn(2+) site is built by lysine 268 and aspartate 273. The active site involves lysine 280. Residues aspartate 291, aspartate 350, and glutamate 352 each contribute to the Mn(2+) site. Residue arginine 354 is part of the active site.

The protein belongs to the peptidase M17 family. Mn(2+) serves as cofactor.

It is found in the cytoplasm. It catalyses the reaction Release of an N-terminal amino acid, Xaa-|-Yaa-, in which Xaa is preferably Leu, but may be other amino acids including Pro although not Arg or Lys, and Yaa may be Pro. Amino acid amides and methyl esters are also readily hydrolyzed, but rates on arylamides are exceedingly low.. The enzyme catalyses Release of an N-terminal amino acid, preferentially leucine, but not glutamic or aspartic acids.. In terms of biological role, presumably involved in the processing and regular turnover of intracellular proteins. Catalyzes the removal of unsubstituted N-terminal amino acids from various peptides. The chain is Probable cytosol aminopeptidase from Herminiimonas arsenicoxydans.